The chain runs to 490 residues: Bifunctional protein HldE (490 aa).

Positions Met1–Ser328 are ribokinase. Asn205–Glu208 contributes to the ATP binding site. Asp275 is an active-site residue. The cytidylyltransferase stretch occupies residues Phe358–Ser490.

This sequence in the N-terminal section; belongs to the carbohydrate kinase PfkB family. The protein in the C-terminal section; belongs to the cytidylyltransferase family. Homodimer.

It catalyses the reaction D-glycero-beta-D-manno-heptose 7-phosphate + ATP = D-glycero-beta-D-manno-heptose 1,7-bisphosphate + ADP + H(+). The enzyme catalyses D-glycero-beta-D-manno-heptose 1-phosphate + ATP + H(+) = ADP-D-glycero-beta-D-manno-heptose + diphosphate. It functions in the pathway nucleotide-sugar biosynthesis; ADP-L-glycero-beta-D-manno-heptose biosynthesis; ADP-L-glycero-beta-D-manno-heptose from D-glycero-beta-D-manno-heptose 7-phosphate: step 1/4. It participates in nucleotide-sugar biosynthesis; ADP-L-glycero-beta-D-manno-heptose biosynthesis; ADP-L-glycero-beta-D-manno-heptose from D-glycero-beta-D-manno-heptose 7-phosphate: step 3/4. Functionally, catalyzes the phosphorylation of D-glycero-D-manno-heptose 7-phosphate at the C-1 position to selectively form D-glycero-beta-D-manno-heptose-1,7-bisphosphate. In terms of biological role, catalyzes the ADP transfer from ATP to D-glycero-beta-D-manno-heptose 1-phosphate, yielding ADP-D-glycero-beta-D-manno-heptose. This is Bifunctional protein HldE from Rhodopseudomonas palustris (strain TIE-1).